The sequence spans 174 residues: MLSAADNLVRIINAVFLIISIGLISGLIGTQTKHSSRVNFCMFAAVYGLVTDSLYGFLANFWTSLTYPAILLVLDFLNFIFTFVAATALAVGIRCHSCKNKTYLEQNKIIQGSSSRCHQSQAAVAFFYFSCFLFLIKVTVATMGMMQNGGFGSNTGFSRRRARRQMGIPTISQV.

Residues 1-7 lie on the Cytoplasmic side of the membrane; that stretch reads MLSAADN. The chain crosses the membrane as a helical span at residues 8–28; the sequence is LVRIINAVFLIISIGLISGLI. Over 29 to 41 the chain is Extracellular; that stretch reads GTQTKHSSRVNFC. A helical transmembrane segment spans residues 42–62; it reads MFAAVYGLVTDSLYGFLANFW. The Cytoplasmic segment spans residues 63–69; that stretch reads TSLTYPA. A helical transmembrane segment spans residues 70-90; it reads ILLVLDFLNFIFTFVAATALA. The Extracellular segment spans residues 91-122; the sequence is VGIRCHSCKNKTYLEQNKIIQGSSSRCHQSQA. Residues 123–143 traverse the membrane as a helical segment; the sequence is AVAFFYFSCFLFLIKVTVATM. The Cytoplasmic segment spans residues 144-174; it reads GMMQNGGFGSNTGFSRRRARRQMGIPTISQV.

It belongs to the NCE102 family.

Its subcellular location is the cell membrane. Involved in membrane organization. Required for the formation of membrane compartments of CAN1 (MCCs), localization of CAN1 at the MCCs and subsequent invagination of the plasma membrane at the MCCs sites. Involved in eisosome organization and might act as a sensor of sphingolipids that regulates plasma membrane function. Involved in a novel pathway of export of proteins that lack a cleavable signal sequence. Non-classical export pathway also functions as an alternative clearance/detoxification pathway to eliminate damaged material, when the basic repair pathway is not sufficient. In Saccharomyces cerevisiae (strain ATCC 204508 / S288c) (Baker's yeast), this protein is Non-classical export protein 2 homolog 1 (FHN1).